The following is a 590-amino-acid chain: tRNA-guanine(15) transglycosylase (590 aa).

D90 serves as the catalytic Nucleophile. D125 is a binding site for substrate. Residues C278, C280, and C283 each coordinate Zn(2+). Positions K502–V577 constitute a PUA domain.

This sequence belongs to the archaeosine tRNA-ribosyltransferase family. Zn(2+) is required as a cofactor.

The catalysed reaction is guanosine(15) in tRNA + 7-cyano-7-deazaguanine = 7-cyano-7-carbaguanosine(15) in tRNA + guanine. Its pathway is tRNA modification; archaeosine-tRNA biosynthesis. Functionally, exchanges the guanine residue with 7-cyano-7-deazaguanine (preQ0) at position 15 in the dihydrouridine loop (D-loop) of archaeal tRNAs. The sequence is that of tRNA-guanine(15) transglycosylase from Korarchaeum cryptofilum (strain OPF8).